A 150-amino-acid chain; its full sequence is Non-specific lipid transfer protein GPI-anchored 7 (150 aa).

Positions 1–25 are cleaved as a signal peptide; that stretch reads MTKTMMIFAAAMTVMALLLVPTIEA. Disulfide bonds link Cys29–Cys66, Cys36–Cys50, Cys51–Cys92, and Cys64–Cys101. N-linked (GlcNAc...) asparagine glycans are attached at residues Asn41, Asn79, and Asn93. The disordered stretch occupies residues 103-125; the sequence is AKGAPSPKASLPPPAPAGNTKKD. Residue Asp125 is the site of GPI-anchor amidated aspartate attachment. Positions 126–150 are cleaved as a propeptide — removed in mature form; sequence AGAGNKLAGYGVTTVILSLISSIFF.

It belongs to the plant LTP family. In terms of tissue distribution, up-regulated in the epidermis of stems.

The protein localises to the cell membrane. Its function is as follows. Probable lipid transfer protein. This is Non-specific lipid transfer protein GPI-anchored 7 from Arabidopsis thaliana (Mouse-ear cress).